The chain runs to 328 residues: MSSYLEYVSCSSSGGVGGDVLSLAPKFCRSDARPVALQPAFPLGNGDGAFVSCLPLAAARPSPSPPAAPARPSVPPPAAPQYAQCTLEGAYEPGAAPAAAAGGADYGFLGSGPAYDFPGVLGRAADDGGSHVHYATSAVFSGGGSFLLSGQVDYAAFGEPGPFPACLKASADGHPGAFQTASPAPGTYPKSVSPASGLPAAFSTFEWMKVKRNASKKGKLAEYGAASPSSAIRTNFSTKQLTELEKEFHFNKYLTRARRIEIANCLHLNDTQVKIWFQNRRMKQKKREREGLLATAIPVAPLQLPLSGTTPTKFIKNPGSPSQSQEPS.

The short motif at 204 to 209 (TFEWMK) is the Antp-type hexapeptide element. Residues 229 to 288 (SSAIRTNFSTKQLTELEKEFHFNKYLTRARRIEIANCLHLNDTQVKIWFQNRRMKQKKRE) constitute a DNA-binding region (homeobox). The tract at residues 305–328 (PLSGTTPTKFIKNPGSPSQSQEPS) is disordered. Positions 319-328 (GSPSQSQEPS) are enriched in polar residues.

This sequence belongs to the Antp homeobox family. Labial subfamily.

Its subcellular location is the nucleus. Functionally, sequence-specific transcription factor which is part of a developmental regulatory system that provides cells with specific positional identities on the anterior-posterior axis. Acts on the anterior body structures. The polypeptide is Homeobox protein Hox-D1 (HOXD1) (Homo sapiens (Human)).